The following is a 254-amino-acid chain: Type III pantothenate kinase (254 aa).

Position 6 to 13 (6 to 13 (DLGNSAIK)) interacts with ATP. Substrate-binding positions include tyrosine 99 and 106–109 (GVDR). Aspartate 108 serves as the catalytic Proton acceptor. Aspartate 128 lines the K(+) pocket. Position 131 (threonine 131) interacts with ATP. Threonine 182 lines the substrate pocket.

This sequence belongs to the type III pantothenate kinase family. Homodimer. The cofactor is NH4(+). Requires K(+) as cofactor.

The protein resides in the cytoplasm. It catalyses the reaction (R)-pantothenate + ATP = (R)-4'-phosphopantothenate + ADP + H(+). Its pathway is cofactor biosynthesis; coenzyme A biosynthesis; CoA from (R)-pantothenate: step 1/5. Catalyzes the phosphorylation of pantothenate (Pan), the first step in CoA biosynthesis. This is Type III pantothenate kinase from Halorhodospira halophila (strain DSM 244 / SL1) (Ectothiorhodospira halophila (strain DSM 244 / SL1)).